The sequence spans 236 residues: Putative (5-formylfuran-3-yl)methyl phosphate synthase (236 aa).

K38 (schiff-base intermediate with substrate) is an active-site residue. Residue K94 is the Proton acceptor of the active site.

This sequence belongs to the MfnB family.

The enzyme catalyses 2 D-glyceraldehyde 3-phosphate = 4-(hydroxymethyl)-2-furancarboxaldehyde phosphate + phosphate + 2 H2O. Its function is as follows. Catalyzes the formation of 4-(hydroxymethyl)-2-furancarboxaldehyde phosphate (4-HFC-P) from two molecules of glyceraldehyde-3-P (GA-3-P). In Methylorubrum extorquens (Methylobacterium dichloromethanicum), this protein is Putative (5-formylfuran-3-yl)methyl phosphate synthase.